Here is a 346-residue protein sequence, read N- to C-terminus: Tryptophan--tRNA ligase (346 aa).

Residues 21–23 and 30–31 contribute to the ATP site; these read QPT and GN. The 'HIGH' region signature appears at 22–31; it reads PTADSYHLGN. D147 is a binding site for L-tryptophan. ATP is bound by residues 159-161, I198, and 207-211; these read GED and KMSKS. Residues 207–211 carry the 'KMSKS' region motif; it reads KMSKS.

Belongs to the class-I aminoacyl-tRNA synthetase family. Homodimer.

It is found in the cytoplasm. It carries out the reaction tRNA(Trp) + L-tryptophan + ATP = L-tryptophyl-tRNA(Trp) + AMP + diphosphate + H(+). Its function is as follows. Catalyzes the attachment of tryptophan to tRNA(Trp). This chain is Tryptophan--tRNA ligase, found in Corynebacterium efficiens (strain DSM 44549 / YS-314 / AJ 12310 / JCM 11189 / NBRC 100395).